Here is a 361-residue protein sequence, read N- to C-terminus: Beta-hexosaminidase (361 aa).

Substrate is bound by residues Asp69, Arg77, Arg144, and 174 to 175 (KH). The active-site Proton donor/acceptor is the His187. Asp258 serves as the catalytic Nucleophile.

The protein belongs to the glycosyl hydrolase 3 family. NagZ subfamily.

The protein resides in the cytoplasm. It catalyses the reaction Hydrolysis of terminal non-reducing N-acetyl-D-hexosamine residues in N-acetyl-beta-D-hexosaminides.. It functions in the pathway cell wall biogenesis; peptidoglycan recycling. Functionally, plays a role in peptidoglycan recycling by cleaving the terminal beta-1,4-linked N-acetylglucosamine (GlcNAc) from peptide-linked peptidoglycan fragments, giving rise to free GlcNAc, anhydro-N-acetylmuramic acid and anhydro-N-acetylmuramic acid-linked peptides. This chain is Beta-hexosaminidase, found in Neisseria meningitidis serogroup C (strain 053442).